A 119-amino-acid polypeptide reads, in one-letter code: U-scoloptoxin(01)-Cw1a (119 aa).

An N-terminal signal peptide occupies residues 1 to 22; sequence MSKATNFYLFVLLGVFVALVRT. The Chitin-binding type-2 domain maps to 38–96; sequence SFSCDGKKPGYYADQQMECQVYHVCTPDNEHAVLLCGPGTIFNQKHLVCDFPSNYACAD. A disulfide bridge links cysteine 73 with cysteine 86.

It belongs to the scoloptoxin-01 family. Contains 3 disulfide bonds. Expressed by the venom gland.

It is found in the secreted. This chain is U-scoloptoxin(01)-Cw1a, found in Cormocephalus westwoodi (Westwood's green centipede).